A 673-amino-acid chain; its full sequence is DNA ligase (673 aa).

NAD(+) is bound by residues 32–36 (DHVYD), 81–82 (SL), and glutamate 111. The N6-AMP-lysine intermediate role is filled by lysine 113. Positions 134, 171, 286, and 310 each coordinate NAD(+). The Zn(2+) site is built by cysteine 404, cysteine 407, cysteine 422, and cysteine 428. Positions 595-673 (NIIDEYKNKT…NEFWKKDNNF (79 aa)) constitute a BRCT domain.

Belongs to the NAD-dependent DNA ligase family. LigA subfamily. Mg(2+) is required as a cofactor. Requires Mn(2+) as cofactor.

It carries out the reaction NAD(+) + (deoxyribonucleotide)n-3'-hydroxyl + 5'-phospho-(deoxyribonucleotide)m = (deoxyribonucleotide)n+m + AMP + beta-nicotinamide D-nucleotide.. In terms of biological role, DNA ligase that catalyzes the formation of phosphodiester linkages between 5'-phosphoryl and 3'-hydroxyl groups in double-stranded DNA using NAD as a coenzyme and as the energy source for the reaction. It is essential for DNA replication and repair of damaged DNA. This chain is DNA ligase, found in Ureaplasma urealyticum serovar 10 (strain ATCC 33699 / Western).